A 350-amino-acid polypeptide reads, in one-letter code: Ion-translocating oxidoreductase complex subunit D (350 aa).

Helical transmembrane passes span 20 to 40 (IMMLVLIAALPGIATQLWFFG), 42 to 62 (GTLFQIILAAVSALAAEAAVL), 68 to 88 (PIAAILKDNSALLTGLLLAVS), 89 to 109 (IPPLAPWWMVVLGTVFAVIIA), and 123 to 143 (PAMIGYVVLLISFPVQMTSWL). Thr-187 is subject to FMN phosphoryl threonine. 5 consecutive transmembrane segments (helical) span residues 215 to 235 (LAGAGWQWVNIAWLIGGVWLL), 244 to 264 (IPVSFLVTLAVCSTLGWAFAG), 267 to 287 (LASPQLHLLSGATMLGAFFIL), 301 to 321 (LIFGALAGLLVWLIRSFGGYP), and 322 to 342 (DGVAFAVLLANITVPLIDYYT).

The protein belongs to the NqrB/RnfD family. In terms of assembly, the complex is composed of six subunits: RnfA, RnfB, RnfC, RnfD, RnfE and RnfG. The cofactor is FMN.

The protein localises to the cell inner membrane. Its function is as follows. Part of a membrane-bound complex that couples electron transfer with translocation of ions across the membrane. This Citrobacter koseri (strain ATCC BAA-895 / CDC 4225-83 / SGSC4696) protein is Ion-translocating oxidoreductase complex subunit D.